A 145-amino-acid polypeptide reads, in one-letter code: 3-dehydroquinate dehydratase (145 aa).

The Proton acceptor role is filled by Y22. Substrate is bound by residues N74, H80, and D87. H100 functions as the Proton donor in the catalytic mechanism. Residues 101–102 and R111 each bind substrate; that span reads IS.

This sequence belongs to the type-II 3-dehydroquinase family. In terms of assembly, homododecamer.

The enzyme catalyses 3-dehydroquinate = 3-dehydroshikimate + H2O. The protein operates within metabolic intermediate biosynthesis; chorismate biosynthesis; chorismate from D-erythrose 4-phosphate and phosphoenolpyruvate: step 3/7. Catalyzes a trans-dehydration via an enolate intermediate. This chain is 3-dehydroquinate dehydratase, found in Lachnoclostridium phytofermentans (strain ATCC 700394 / DSM 18823 / ISDg) (Clostridium phytofermentans).